The chain runs to 349 residues: Protein RecA (349 aa).

Residue 69–76 participates in ATP binding; the sequence is GPESSGKT.

The protein belongs to the RecA family.

It localises to the cytoplasm. Functionally, can catalyze the hydrolysis of ATP in the presence of single-stranded DNA, the ATP-dependent uptake of single-stranded DNA by duplex DNA, and the ATP-dependent hybridization of homologous single-stranded DNAs. It interacts with LexA causing its activation and leading to its autocatalytic cleavage. The chain is Protein RecA from Rippkaea orientalis (strain PCC 8801 / RF-1) (Cyanothece sp. (strain PCC 8801)).